The sequence spans 714 residues: NCK-interacting protein with SH3 domain (714 aa).

An SH3 domain is found at 1-58 (MYRALYAFRSAEPNAMAFAAGETFLVLERSSTHWWLAARARSGETGYVPPAYLHRLQG). Disordered regions lie at residues 103 to 126 (TLSR…DHHL) and 139 to 298 (RTGF…AAET). A compositionally biased stretch (polar residues) spans 106-121 (RRGTSASSATVMTPST). Serine 120 carries the post-translational modification Phosphoserine. The Nuclear localization signal signature appears at 168-185 (RRAAPTTPPPPVKRRDRE). Position 174 is a phosphothreonine (threonine 174). Over residues 200 to 215 (SGGSSVSSGSSASSTS) the composition is skewed to low complexity. The span at 216–226 (MDTLYTGSSPS) shows a compositional bias: polar residues. Pro residues predominate over residues 252 to 263 (QPSPSKAPSPEP). A phosphoserine mark is found at serine 260, serine 286, and serine 673.

As to quaternary structure, associates with the intermediate filaments, vimentin and desmin. Binds the first and third SH3 domains of NCK. Binds the proline-rich domains of N-WASP through its SH3 domain. Similarly, binds diaphanous protein homolog 1 (DRF1). Binds the SH3 domains of GRB2 through its proline-rich domains. Interacts with FASLG.

The protein resides in the nucleus. In terms of biological role, has an important role in stress fiber formation induced by active diaphanous protein homolog 1 (DRF1). Induces microspike formation, in vivo. In vitro, stimulates N-WASP-induced ARP2/3 complex activation in the absence of CDC42. May play an important role in the maintenance of sarcomere and/or in the assembly of myofibrils into sarcomeres. Implicated in regulation of actin polymerization and cell adhesion. The polypeptide is NCK-interacting protein with SH3 domain (Nckipsd) (Mus musculus (Mouse)).